Reading from the N-terminus, the 205-residue chain is MRDRFEEQALALGAAMQALGLVRELATAGRLDDAQAEPLMSSLVKPYEGDLDRLYGGPTALAPGLRRLVTQLTNPQSMESTRYLAGVMHLEKKLSKNRAMLGQLGEGLEAARRQADYFHPLHENVLRNLGALYGETISQLGPRIMVRGDPGHLQDERIAAGIRTMLLAAIRAASLWRECGGGKLTLILRRQRLVQAAHALLERVD.

It belongs to the HflD family.

The protein localises to the cytoplasm. It is found in the cell inner membrane. In Alkalilimnicola ehrlichii (strain ATCC BAA-1101 / DSM 17681 / MLHE-1), this protein is High frequency lysogenization protein HflD homolog.